Consider the following 549-residue polypeptide: MLASIPHMETLRSLPRNPDVVARHPSAEDLDAAQQLISSAQAGREHPQDRHYTDNGSRKSEAGAPHSHHEGEYPIVQTSETPMNGHHVEKTSPKSQKDTSFLGHSCSNCGTKSTPLWRRSPTGAMICNACGLYLKARNVARPTKRNRTQASPEAYHPQNQSVGSQPDPAVTGSEGCTGSCPGGGNCNGTGGAEGCDGCPAYNNRVYKSTARGNVAAHALNRAGNSDAVPSPEAEAPARNSGQPEGNMLVACQNCGTTVTPLWRRDENGHPICNACGLYYKLHGSYRPTTMKKTIIKRRKRVVPALRENSPTAATHSSHGSSASPEASSPATLAYSHDERHRYYSSEPVDQYHRISPAAQRPFGFAPPPVDFTNFNSGAVTLPHHPPPPRLLEPGHPPLSQFARRSISPSSSGNSKKRTLAEAGANTDTGPVPTTLEAGSNQLPPIVSSANPPPPARLSSISSILNHAHARDESRLDPSLAALGRQQQSQPHHPQSSPLAPTQAASQSLPGVSNMDNHVEDRRAKLQREAEEMREQLRAKERELAELAGQ.

The tract at residues 40–100 is disordered; that stretch reads AQAGREHPQD…TSPKSQKDTS (61 aa). Composition is skewed to basic and acidic residues over residues 43-72 and 86-97; these read GREHPQDRHYTDNGSRKSEAGAPHSHHEGE and HHVEKTSPKSQK. The segment at 106–130 adopts a GATA-type 1 zinc-finger fold; that stretch reads CSNCGTKSTPLWRRSPTGAMICNAC. Positions 141–174 are disordered; that stretch reads RPTKRNRTQASPEAYHPQNQSVGSQPDPAVTGSE. Positions 180 to 198 are cystein-rich region (CRR); sequence CPGGGNCNGTGGAEGCDGC. Positions 223–244 are disordered; sequence GNSDAVPSPEAEAPARNSGQPE. Residues 251-275 form a GATA-type 2 zinc finger; that stretch reads CQNCGTTVTPLWRRDENGHPICNAC. 3 disordered regions span residues 306 to 332, 375 to 459, and 482 to 535; these read RENSPTAATHSSHGSSASPEASSPATL, NSGA…RLSS, and LGRQ…MREQ. A compositionally biased stretch (low complexity) spans 309–331; sequence SPTAATHSSHGSSASPEASSPAT. A compositionally biased stretch (pro residues) spans 383-396; the sequence is HHPPPPRLLEPGHP. A compositionally biased stretch (low complexity) spans 485-497; that stretch reads QQQSQPHHPQSSP. Residues 498–515 show a composition bias toward polar residues; sequence LAPTQAASQSLPGVSNMD. The stretch at 511-549 forms a coiled coil; that stretch reads VSNMDNHVEDRRAKLQREAEEMREQLRAKERELAELAGQ. Over residues 516–535 the composition is skewed to basic and acidic residues; the sequence is NHVEDRRAKLQREAEEMREQ.

It is found in the nucleus. Its function is as follows. GATA-type transcription repressor that regulates iron- acquisition genes through specific binding GATA sequence elements of target promoters. Iron acquisition regulation is critical for survival under both iron-limiting conditions (to acquire essential iron) and iron-replete conditions (to limit iron toxicity). SreA targets include genes encoding a number of key iron-regulated factors such as those involved in siderophore biosynthesis. The chain is GATA-type transcription factor sreA from Emericella nidulans (strain FGSC A4 / ATCC 38163 / CBS 112.46 / NRRL 194 / M139) (Aspergillus nidulans).